We begin with the raw amino-acid sequence, 238 residues long: Flagellar L-ring protein (238 aa).

The signal sequence occupies residues 1–16 (MNKAILAVAMVLLLAG). Cysteine 17 carries N-palmitoyl cysteine lipidation. Cysteine 17 carries the S-diacylglycerol cysteine lipid modification.

Belongs to the FlgH family. The basal body constitutes a major portion of the flagellar organelle and consists of four rings (L,P,S, and M) mounted on a central rod.

The protein resides in the cell outer membrane. The protein localises to the bacterial flagellum basal body. Assembles around the rod to form the L-ring and probably protects the motor/basal body from shearing forces during rotation. In Brucella melitensis biotype 2 (strain ATCC 23457), this protein is Flagellar L-ring protein.